Reading from the N-terminus, the 373-residue chain is Arfaptin-1 (373 aa).

The disordered stretch occupies residues 1-47; that stretch reads MAQESPKNSAAEIPVTSNGEVDDAHEHGYNRDLKHSLPSGLGLSETQ. Ala-2 carries the post-translational modification N-acetylalanine. Ser-5 is modified (phosphoserine). Over residues 22-35 the composition is skewed to basic and acidic residues; the sequence is DDAHEHGYNRDLKH. Residues Ser-36, Ser-39, Ser-69, Ser-79, and Ser-132 each carry the phosphoserine modification. The region spanning 153–353 is the AH domain; that stretch reads TVDLELEAQI…NQKQLELTLK (201 aa). Position 361 is a phosphothreonine (Thr-361).

As to quaternary structure, forms homodimers or heterodimers with ARFIP2. Interacts with non-myristoylated GTP-bound ARF3, but not to GDP-bound ARF3. Interacts with ARF1. Binds with lower affinity to ARF5 and with very little affinity to ARF6. Interacts with ARL1. Interacts with ATG9A. In terms of processing, phosphorylated by PRKD1; phosphorylation delocalizes ARFIP1 from the Golgi and disrupts its ability to inhibit the activity of ADP-ribosylation factor, an important component of the vesicle scission machinery.

It is found in the golgi apparatus. The protein localises to the trans-Golgi network membrane. Functionally, plays a role in controlling biogenesis of secretory granules at the trans-Golgi network. Mechanistically, binds ARF-GTP at the neck of a growing secretory granule precursor and forms a protective scaffold. Once the granule precursor has been completely loaded, active PRKD1 phosphorylates ARFIP1 and releases it from ARFs. In turn, ARFs induce fission. Through this mechanism, ensures proper secretory granule formation at the Golgi of pancreatic beta cells. The protein is Arfaptin-1 of Mus musculus (Mouse).